The following is a 413-amino-acid chain: Serine/threonine transporter SstT (413 aa).

The next 9 helical transmembrane spans lie at 14–34 (GSLV…ASFS), 44–64 (LGTL…FILV), 82–102 (IVLL…VVSF), 141–161 (ALAS…GVAL), 178–198 (GVTF…FGLV), 217–237 (LMVL…LIVF), 290–310 (IPLG…VLTL), 330–350 (LVAA…LLLI), and 356–376 (LFGI…IIGV).

This sequence belongs to the dicarboxylate/amino acid:cation symporter (DAACS) (TC 2.A.23) family.

It is found in the cell inner membrane. It catalyses the reaction L-serine(in) + Na(+)(in) = L-serine(out) + Na(+)(out). The enzyme catalyses L-threonine(in) + Na(+)(in) = L-threonine(out) + Na(+)(out). Its function is as follows. Involved in the import of serine and threonine into the cell, with the concomitant import of sodium (symport system). The chain is Serine/threonine transporter SstT from Edwardsiella ictaluri (strain 93-146).